The following is a 582-amino-acid chain: Threonine--tRNA ligase (582 aa).

The tract at residues 185–478 is catalytic; that stretch reads DHRKLGKELD…LVEHYGGAFP (294 aa). Residues C278, H329, and H455 each coordinate Zn(2+).

It belongs to the class-II aminoacyl-tRNA synthetase family. As to quaternary structure, homodimer. Zn(2+) is required as a cofactor.

The protein resides in the cytoplasm. It catalyses the reaction tRNA(Thr) + L-threonine + ATP = L-threonyl-tRNA(Thr) + AMP + diphosphate + H(+). Its function is as follows. Catalyzes the attachment of threonine to tRNA(Thr) in a two-step reaction: L-threonine is first activated by ATP to form Thr-AMP and then transferred to the acceptor end of tRNA(Thr). Also edits incorrectly charged L-seryl-tRNA(Thr). In Borrelia garinii subsp. bavariensis (strain ATCC BAA-2496 / DSM 23469 / PBi) (Borreliella bavariensis), this protein is Threonine--tRNA ligase.